The chain runs to 504 residues: Bacterial leucyl aminopeptidase (504 aa).

An N-terminal signal peptide occupies residues 1-21 (MKYTKTLLAMVLSATFCQAYA). Residues 22–106 (EDKVWISIGA…AMPTTLASFV (85 aa)) constitute a propeptide that is removed on maturation. Positions 203, 223, 258, and 285 each coordinate Zn(2+). A disulfide bond links Cys-329 and Cys-333. Zn(2+) is bound at residue His-362. The propeptide at 406–504 (LEDGVPVTDL…SGASLKASTF (99 aa)) is removed in mature form.

This sequence belongs to the peptidase M28 family. M28E subfamily. Requires Zn(2+) as cofactor.

The protein localises to the secreted. The enzyme catalyses Release of an N-terminal amino acid, preferentially leucine, but not glutamic or aspartic acids.. This Vibrio proteolyticus (Aeromonas proteolytica) protein is Bacterial leucyl aminopeptidase.